A 314-amino-acid chain; its full sequence is 4-hydroxy-3-methylbut-2-enyl diphosphate reductase (314 aa).

Cys12 contacts [4Fe-4S] cluster. Residues His41 and His74 each contribute to the (2E)-4-hydroxy-3-methylbut-2-enyl diphosphate site. 2 residues coordinate dimethylallyl diphosphate: His41 and His74. Residues His41 and His74 each coordinate isopentenyl diphosphate. Residue Cys96 coordinates [4Fe-4S] cluster. His124 lines the (2E)-4-hydroxy-3-methylbut-2-enyl diphosphate pocket. Dimethylallyl diphosphate is bound at residue His124. His124 is a binding site for isopentenyl diphosphate. Glu126 serves as the catalytic Proton donor. Thr167 contributes to the (2E)-4-hydroxy-3-methylbut-2-enyl diphosphate binding site. Cys197 contacts [4Fe-4S] cluster. Ser225, Ser226, Asn227, and Ser269 together coordinate (2E)-4-hydroxy-3-methylbut-2-enyl diphosphate. The dimethylallyl diphosphate site is built by Ser225, Ser226, Asn227, and Ser269. Positions 225, 226, 227, and 269 each coordinate isopentenyl diphosphate.

This sequence belongs to the IspH family. [4Fe-4S] cluster is required as a cofactor.

It carries out the reaction isopentenyl diphosphate + 2 oxidized [2Fe-2S]-[ferredoxin] + H2O = (2E)-4-hydroxy-3-methylbut-2-enyl diphosphate + 2 reduced [2Fe-2S]-[ferredoxin] + 2 H(+). It catalyses the reaction dimethylallyl diphosphate + 2 oxidized [2Fe-2S]-[ferredoxin] + H2O = (2E)-4-hydroxy-3-methylbut-2-enyl diphosphate + 2 reduced [2Fe-2S]-[ferredoxin] + 2 H(+). The protein operates within isoprenoid biosynthesis; dimethylallyl diphosphate biosynthesis; dimethylallyl diphosphate from (2E)-4-hydroxy-3-methylbutenyl diphosphate: step 1/1. It participates in isoprenoid biosynthesis; isopentenyl diphosphate biosynthesis via DXP pathway; isopentenyl diphosphate from 1-deoxy-D-xylulose 5-phosphate: step 6/6. Its function is as follows. Catalyzes the conversion of 1-hydroxy-2-methyl-2-(E)-butenyl 4-diphosphate (HMBPP) into a mixture of isopentenyl diphosphate (IPP) and dimethylallyl diphosphate (DMAPP). Acts in the terminal step of the DOXP/MEP pathway for isoprenoid precursor biosynthesis. This chain is 4-hydroxy-3-methylbut-2-enyl diphosphate reductase, found in Aliivibrio fischeri (strain ATCC 700601 / ES114) (Vibrio fischeri).